Reading from the N-terminus, the 125-residue chain is Large ribosomal subunit protein bL17 (125 aa).

The protein belongs to the bacterial ribosomal protein bL17 family. Part of the 50S ribosomal subunit. Contacts protein L32.

The chain is Large ribosomal subunit protein bL17 from Syntrophus aciditrophicus (strain SB).